The chain runs to 93 residues: Alpha-defensin 21 (93 aa).

An N-terminal signal peptide occupies residues 1–19 (MKTLVLLSALILLAYQVQT). Positions 20 to 58 (DPIQNTDEETNTEEQPGEDDQAVSVSFGGQEGSALHEKL) are excised as a propeptide. A disordered region spans residues 22–43 (IQNTDEETNTEEQPGEDDQAVS). Positions 25 to 40 (TDEETNTEEQPGEDDQ) are enriched in acidic residues. Cystine bridges form between C64-C89, C66-C81, and C71-C88.

Belongs to the alpha-defensin family.

Its subcellular location is the secreted. May have microbicidal activities. In Mus musculus (Mouse), this protein is Alpha-defensin 21 (Defa21).